The sequence spans 119 residues: Phosphoribosyl-AMP cyclohydrolase (119 aa).

Asp77 is a Mg(2+) binding site. Residue Cys78 participates in Zn(2+) binding. Mg(2+)-binding residues include Asp79 and Asp81. Zn(2+) is bound by residues Cys94 and Cys101.

This sequence belongs to the PRA-CH family. In terms of assembly, homodimer. Mg(2+) serves as cofactor. Requires Zn(2+) as cofactor.

Its subcellular location is the cytoplasm. It carries out the reaction 1-(5-phospho-beta-D-ribosyl)-5'-AMP + H2O = 1-(5-phospho-beta-D-ribosyl)-5-[(5-phospho-beta-D-ribosylamino)methylideneamino]imidazole-4-carboxamide. The protein operates within amino-acid biosynthesis; L-histidine biosynthesis; L-histidine from 5-phospho-alpha-D-ribose 1-diphosphate: step 3/9. Catalyzes the hydrolysis of the adenine ring of phosphoribosyl-AMP. The chain is Phosphoribosyl-AMP cyclohydrolase from Cereibacter sphaeroides (strain ATCC 17029 / ATH 2.4.9) (Rhodobacter sphaeroides).